Reading from the N-terminus, the 1396-residue chain is Sterol 3-beta-glucosyltransferase (1396 aa).

The span at 1 to 16 shows a compositional bias: basic and acidic residues; sequence MRPLLDEAKRRVDRRL. Disordered stretches follow at residues 1–59, 82–193, and 206–233; these read MRPL…TKEG, HARF…AAPV, and SKGSMNQSPRSPPAETQEEQSQEQTSAS. Residues 18 to 28 show a composition bias toward polar residues; it reads ASRQSLSTSRI. Composition is skewed to basic and acidic residues over residues 35 to 44 and 82 to 108; these read ERLKDDHDAQ and HARFDDSSDSERDTDRPPQKRTEKESQ. Over residues 156-175 the composition is skewed to polar residues; the sequence is GSSQRQGGAQTEPSTGNQMS. The 52-residue stretch at 237–288 folds into the GRAM 1 domain; the sequence is LRLMEMFGFESPEKVLVEYACSLVQSMLLQGYMYVTEGHICFYAYLPRKSTV. In terms of domain architecture, PH spans 289–387; it reads AIKSGYLYKR…WVKSLQKVIF (99 aa). 2 stretches are compositionally biased toward polar residues: residues 459-479 and 487-497; these read QAKNPSRESPQPGRTTPQSRA and SLTSGLSQVLG. Disordered regions lie at residues 459-531 and 576-635; these read QAKN…RDLS and FRRQ…VQQS. The span at 585–595 shows a compositional bias: basic and acidic residues; that stretch reads QFGRRHSDETA. One can recognise a GRAM 2 domain in the interval 719 to 785; sequence DRFRAHFALP…KDVENVEKEK (67 aa). The segment at 841 to 880 is disordered; that stretch reads EQDESEAAKAEHRMLQEARKDASGGLIPQTPSDESPEIHP. Residues 846–862 show a composition bias toward basic and acidic residues; that stretch reads EAAKAEHRMLQEARKDA. The UDP-alpha-D-glucose site is built by S907, R908, D910, A1210, H1212, H1225, G1229, T1230, D1249, and Q1250.

It belongs to the glycosyltransferase 28 family.

Its subcellular location is the cytoplasm. The protein resides in the preautophagosomal structure membrane. The catalysed reaction is a sterol + UDP-alpha-D-glucose = a sterol 3-beta-D-glucoside + UDP + H(+). It carries out the reaction ergosterol + UDP-alpha-D-glucose = ergosteryl 3-beta-D-glucoside + UDP + H(+). Its function is as follows. Sterol glycosyltransferase responsible for the glycosylation of ergosterol to form ergosterol-glucoside. This chain is Sterol 3-beta-glucosyltransferase, found in Aspergillus terreus (strain NIH 2624 / FGSC A1156).